Reading from the N-terminus, the 564-residue chain is Beta-hexosaminidase subunit B2 (564 aa).

Residues Met-1–Gly-19 form the signal peptide. N-linked (GlcNAc...) asparagine glycosylation is found at Asn-43, Asn-84, Asn-303, and Asn-347. Glu-357 (proton donor) is an active-site residue. N-linked (GlcNAc...) asparagine glycosylation is found at Asn-364, Asn-377, Asn-439, Asn-524, and Asn-551.

Belongs to the glycosyl hydrolase 20 family.

The protein resides in the lysosome. It catalyses the reaction Hydrolysis of terminal non-reducing N-acetyl-D-hexosamine residues in N-acetyl-beta-D-hexosaminides.. Responsible for the degradation of GM2 gangliosides, and a variety of other molecules containing terminal N-acetyl hexosamines. In Dictyostelium discoideum (Social amoeba), this protein is Beta-hexosaminidase subunit B2 (hexb2).